The following is a 261-amino-acid chain: Cytochrome c oxidase subunit 3 (261 aa).

Over 1 to 15 (MTHQTHAYHMVNPSP) the chain is Mitochondrial matrix. The helical transmembrane segment at 16–34 (WPLTGAMSALLLTSGLIMW) threads the bilayer. The Mitochondrial intermembrane portion of the chain corresponds to 35–40 (FHFNSY). A helical membrane pass occupies residues 41 to 66 (TLLLLGLLTNLISSYQWWRDIVREGT). Topologically, residues 67 to 72 (YQGHHT) are mitochondrial matrix. Residues 73–105 (KIVQKGLRYGMILFIISEVFFFLGFFWAFYHSS) traverse the membrane as a helical segment. The Mitochondrial intermembrane segment spans residues 106–128 (LAPTPELGGCWPPTGISPLNPLE). A helical transmembrane segment spans residues 129 to 152 (VPLLNTSILLASGVSITWAHHSLM). Residues 153-155 (EGN) are Mitochondrial matrix-facing. The chain crosses the membrane as a helical span at residues 156 to 183 (RKQMLQALTITIALGLYFTALQAMEYYE). The Mitochondrial intermembrane segment spans residues 184–190 (ASFTISD). The helical transmembrane segment at 191 to 223 (GVYGSTFFVATGFHGLHVIIGTTFLITCLVRQT) threads the bilayer. The Mitochondrial matrix portion of the chain corresponds to 224-232 (LYHFTSNHH). The chain crosses the membrane as a helical span at residues 233–256 (FGFEAAAWYWHFVDVVWLFLYVSI). The Mitochondrial intermembrane portion of the chain corresponds to 257–261 (YWWGS).

Belongs to the cytochrome c oxidase subunit 3 family. In terms of assembly, component of the cytochrome c oxidase (complex IV, CIV), a multisubunit enzyme composed of 14 subunits. The complex is composed of a catalytic core of 3 subunits MT-CO1, MT-CO2 and MT-CO3, encoded in the mitochondrial DNA, and 11 supernumerary subunits COX4I, COX5A, COX5B, COX6A, COX6B, COX6C, COX7A, COX7B, COX7C, COX8 and NDUFA4, which are encoded in the nuclear genome. The complex exists as a monomer or a dimer and forms supercomplexes (SCs) in the inner mitochondrial membrane with NADH-ubiquinone oxidoreductase (complex I, CI) and ubiquinol-cytochrome c oxidoreductase (cytochrome b-c1 complex, complex III, CIII), resulting in different assemblies (supercomplex SCI(1)III(2)IV(1) and megacomplex MCI(2)III(2)IV(2)).

It is found in the mitochondrion inner membrane. It catalyses the reaction 4 Fe(II)-[cytochrome c] + O2 + 8 H(+)(in) = 4 Fe(III)-[cytochrome c] + 2 H2O + 4 H(+)(out). In terms of biological role, component of the cytochrome c oxidase, the last enzyme in the mitochondrial electron transport chain which drives oxidative phosphorylation. The respiratory chain contains 3 multisubunit complexes succinate dehydrogenase (complex II, CII), ubiquinol-cytochrome c oxidoreductase (cytochrome b-c1 complex, complex III, CIII) and cytochrome c oxidase (complex IV, CIV), that cooperate to transfer electrons derived from NADH and succinate to molecular oxygen, creating an electrochemical gradient over the inner membrane that drives transmembrane transport and the ATP synthase. Cytochrome c oxidase is the component of the respiratory chain that catalyzes the reduction of oxygen to water. Electrons originating from reduced cytochrome c in the intermembrane space (IMS) are transferred via the dinuclear copper A center (CU(A)) of subunit 2 and heme A of subunit 1 to the active site in subunit 1, a binuclear center (BNC) formed by heme A3 and copper B (CU(B)). The BNC reduces molecular oxygen to 2 water molecules using 4 electrons from cytochrome c in the IMS and 4 protons from the mitochondrial matrix. The polypeptide is Cytochrome c oxidase subunit 3 (MT-CO3) (Ornithorhynchus anatinus (Duckbill platypus)).